Reading from the N-terminus, the 187-residue chain is Putative acyl-coenzyme A oxidase At3g06690 (187 aa).

The segment at 1–21 is disordered; that stretch reads MTKEPIYSPRMLHRDPDSPRP.

This sequence belongs to the acyl-CoA oxidase family.

It catalyses the reaction a 2,3-saturated acyl-CoA + O2 = a (2E)-enoyl-CoA + H2O2. In Arabidopsis thaliana (Mouse-ear cress), this protein is Putative acyl-coenzyme A oxidase At3g06690.